The sequence spans 92 residues: Co-chaperonin GroES (92 aa).

The protein belongs to the GroES chaperonin family. As to quaternary structure, heptamer of 7 subunits arranged in a ring. Interacts with the chaperonin GroEL.

The protein localises to the cytoplasm. Together with the chaperonin GroEL, plays an essential role in assisting protein folding. The GroEL-GroES system forms a nano-cage that allows encapsulation of the non-native substrate proteins and provides a physical environment optimized to promote and accelerate protein folding. GroES binds to the apical surface of the GroEL ring, thereby capping the opening of the GroEL channel. In Thermotoga petrophila (strain ATCC BAA-488 / DSM 13995 / JCM 10881 / RKU-1), this protein is Co-chaperonin GroES.